The primary structure comprises 198 residues: ATP-dependent Clp protease proteolytic subunit (198 aa).

Catalysis depends on S101, which acts as the Nucleophile. H126 is an active-site residue.

This sequence belongs to the peptidase S14 family. Component of the chloroplastic Clp protease core complex.

The protein localises to the plastid. The protein resides in the chloroplast stroma. It carries out the reaction Hydrolysis of proteins to small peptides in the presence of ATP and magnesium. alpha-casein is the usual test substrate. In the absence of ATP, only oligopeptides shorter than five residues are hydrolyzed (such as succinyl-Leu-Tyr-|-NHMec, and Leu-Tyr-Leu-|-Tyr-Trp, in which cleavage of the -Tyr-|-Leu- and -Tyr-|-Trp bonds also occurs).. In terms of biological role, cleaves peptides in various proteins in a process that requires ATP hydrolysis. Has a chymotrypsin-like activity. Plays a major role in the degradation of misfolded proteins. The sequence is that of ATP-dependent Clp protease proteolytic subunit from Psilotum nudum (Whisk fern).